The following is a 504-amino-acid chain: Maturase K (504 aa).

It belongs to the intron maturase 2 family. MatK subfamily.

It is found in the plastid. Its subcellular location is the chloroplast. Usually encoded in the trnK tRNA gene intron. Probably assists in splicing its own and other chloroplast group II introns. The sequence is that of Maturase K from Vigna unguiculata (Cowpea).